The chain runs to 207 residues: Small ribosomal subunit protein uS4 (207 aa).

Residues 31–55 (KCKLDSKPGQHGRTSGARTSDYGTQ) form a disordered region. Residues 42–53 (GRTSGARTSDYG) show a composition bias toward polar residues. The 64-residue stretch at 97–160 (SRLDNVVYRM…KKQARIVEAL (64 aa)) folds into the S4 RNA-binding domain.

The protein belongs to the universal ribosomal protein uS4 family. As to quaternary structure, part of the 30S ribosomal subunit. Contacts protein S5. The interaction surface between S4 and S5 is involved in control of translational fidelity.

In terms of biological role, one of the primary rRNA binding proteins, it binds directly to 16S rRNA where it nucleates assembly of the body of the 30S subunit. Its function is as follows. With S5 and S12 plays an important role in translational accuracy. This is Small ribosomal subunit protein uS4 from Burkholderia orbicola (strain MC0-3).